Consider the following 1064-residue polypeptide: Lysine-specific demethylase 4A (1064 aa).

N-acetylalanine is present on alanine 2. The region spanning 14-56 (IMTFYPTMEEFRNFSRYIAYIESQGAHRAGLAKVVPPKEWKPR) is the JmjN domain. A 2-oxoglutarate-binding site is contributed by tyrosine 132. One can recognise a JmjC domain in the interval 142–308 (EQHVDEWNIG…YGKQAVLCSC (167 aa)). Positions 188 and 190 each coordinate Fe cation. 2 residues coordinate 2-oxoglutarate: asparagine 198 and lysine 206. Residues cysteine 234 and histidine 240 each coordinate Zn(2+). 2-oxoglutarate is bound at residue lysine 241. Fe cation is bound at residue histidine 276. 2 residues coordinate Zn(2+): cysteine 306 and cysteine 308. 5 disordered regions span residues 354–384 (LKDSGGLTPRAGSEECPEEDVEAADQGEEGD), 434–489 (LAPV…LDLS), 502–537 (SGSKKKSSSSLGSTSSQDSVSSDSETAESVSCQGQE), 549–573 (RGDGKAATGEPSVKKKRSAPRSISE), and 590–643 (NKKT…LSQL). Over residues 368 to 382 (ECPEEDVEAADQGEE) the composition is skewed to acidic residues. Over residues 460–472 (TEVKFEELKNVKL) the composition is skewed to basic and acidic residues. Acidic residues predominate over residues 473-482 (EEEDEEDEPE). A compositionally biased stretch (low complexity) spans 509–525 (SSSLGSTSSQDSVSSDS). The residue at position 523 (serine 523) is a Phosphoserine. Residues 528–537 (AESVSCQGQE) show a composition bias toward polar residues. Residues 593–608 (TKGRRQPLSKLPRHHP) show a composition bias toward basic residues. Residues 597-638 (RQPLSKLPRHHPLVLQECGSDDETSEQLTPEEEAEETEAWAK) form an interaction with NCOR1 region. Over residues 615–634 (GSDDETSEQLTPEEEAEETE) the composition is skewed to acidic residues. The PHD-type 1 zinc-finger motif lies at 709-767 (MCFTTTGCSTDINLSTPYLEEDGTSMLVSCKKCSVRVHASCYGVPPAKASEEWMCSRCS). A C2HC pre-PHD-type zinc finger spans residues 772-805 (EEDCCLCSLRGGALQRANDDRWVHVSCAVAILEA). A PHD-type 2 zinc finger spans residues 828–885 (LKCVFCKKRRKRNAGCCVQCSHGRCPTAFHVSCAQAAGVMMQPDDWPFVVFITCFRHK). Tudor domains lie at 897–954 (LSIT…CLQL) and 955–1011 (GPPA…EELP).

This sequence belongs to the JHDM3 histone demethylase family. As to quaternary structure, interacts with histone deacetylase proteins HDAC1, HDAC2 and HDAC3. Interacts with RB and NCOR1. Interacts with VRK1. Fe(2+) is required as a cofactor. Ubiquitinated by RNF8 and RNF168, leading to its degradation. Degradation promotes accessibility of H4K20me2 mark for DNA repair protein TP53BP1, which is then recruited. Also ubiquitinated by the SCF(FBXO22) complex; leading to proteasomal degradation. As to expression, widely expressed.

It localises to the nucleus. It carries out the reaction N(6),N(6),N(6)-trimethyl-L-lysyl(9)-[histone H3] + 2 2-oxoglutarate + 2 O2 = N(6)-methyl-L-lysyl(9)-[histone H3] + 2 formaldehyde + 2 succinate + 2 CO2. The enzyme catalyses N(6),N(6),N(6)-trimethyl-L-lysyl(36)-[histone H3] + 2 2-oxoglutarate + 2 O2 = N(6)-methyl-L-lysyl(36)-[histone H3] + 2 formaldehyde + 2 succinate + 2 CO2. Histone demethylase that specifically demethylates 'Lys-9' and 'Lys-36' residues of histone H3, thereby playing a central role in histone code. Does not demethylate histone H3 'Lys-4', H3 'Lys-27' nor H4 'Lys-20'. Demethylates trimethylated H3 'Lys-9' and H3 'Lys-36' residue, while it has no activity on mono- and dimethylated residues. Demethylation of Lys residue generates formaldehyde and succinate. Participates in transcriptional repression of ASCL2 and E2F-responsive promoters via the recruitment of histone deacetylases and NCOR1, respectively. The protein is Lysine-specific demethylase 4A (Kdm4a) of Mus musculus (Mouse).